A 190-amino-acid polypeptide reads, in one-letter code: Large ribosomal subunit protein bL9 (190 aa).

Belongs to the bacterial ribosomal protein bL9 family.

Its function is as follows. Binds to the 23S rRNA. In Methylorubrum populi (strain ATCC BAA-705 / NCIMB 13946 / BJ001) (Methylobacterium populi), this protein is Large ribosomal subunit protein bL9.